Here is a 181-residue protein sequence, read N- to C-terminus: Isopentenyl-diphosphate Delta-isomerase (181 aa).

Mn(2+) is bound by residues His-25 and His-32. Positions Pro-30 to Met-164 constitute a Nudix hydrolase domain. Cys-67 is a catalytic residue. Cys-67 lines the Mg(2+) pocket. His-69 contributes to the Mn(2+) binding site. Glu-87 contacts Mg(2+). 2 residues coordinate Mn(2+): Glu-114 and Glu-116. Glu-116 is an active-site residue.

It belongs to the IPP isomerase type 1 family. In terms of assembly, homodimer. It depends on Mg(2+) as a cofactor. Mn(2+) is required as a cofactor.

The protein resides in the cytoplasm. It catalyses the reaction isopentenyl diphosphate = dimethylallyl diphosphate. It participates in isoprenoid biosynthesis; dimethylallyl diphosphate biosynthesis; dimethylallyl diphosphate from isopentenyl diphosphate: step 1/1. Its function is as follows. Catalyzes the 1,3-allylic rearrangement of the homoallylic substrate isopentenyl (IPP) to its highly electrophilic allylic isomer, dimethylallyl diphosphate (DMAPP). This Salmonella typhi protein is Isopentenyl-diphosphate Delta-isomerase.